A 291-amino-acid polypeptide reads, in one-letter code: Light-independent protochlorophyllide reductase iron-sulfur ATP-binding protein (291 aa).

ATP-binding positions include glycine 10 to threonine 15 and lysine 39. Residue serine 14 coordinates Mg(2+). [4Fe-4S] cluster-binding residues include cysteine 95 and cysteine 129. ATP is bound at residue asparagine 180 to arginine 181.

It belongs to the NifH/BchL/ChlL family. Homodimer. Protochlorophyllide reductase is composed of three subunits; ChlL, ChlN and ChlB. Requires [4Fe-4S] cluster as cofactor.

The protein localises to the plastid. Its subcellular location is the chloroplast. The catalysed reaction is chlorophyllide a + oxidized 2[4Fe-4S]-[ferredoxin] + 2 ADP + 2 phosphate = protochlorophyllide a + reduced 2[4Fe-4S]-[ferredoxin] + 2 ATP + 2 H2O. It participates in porphyrin-containing compound metabolism; chlorophyll biosynthesis (light-independent). Component of the dark-operative protochlorophyllide reductase (DPOR) that uses Mg-ATP and reduced ferredoxin to reduce ring D of protochlorophyllide (Pchlide) to form chlorophyllide a (Chlide). This reaction is light-independent. The L component serves as a unique electron donor to the NB-component of the complex, and binds Mg-ATP. The chain is Light-independent protochlorophyllide reductase iron-sulfur ATP-binding protein from Pinus koraiensis (Korean pine).